The primary structure comprises 203 residues: Putative 3-methyladenine DNA glycosylase (203 aa).

Belongs to the DNA glycosylase MPG family.

The chain is Putative 3-methyladenine DNA glycosylase from Clostridium tetani (strain Massachusetts / E88).